The primary structure comprises 137 residues: Large ribosomal subunit protein uL16 (137 aa).

Belongs to the universal ribosomal protein uL16 family. As to quaternary structure, part of the 50S ribosomal subunit.

Binds 23S rRNA and is also seen to make contacts with the A and possibly P site tRNAs. The sequence is that of Large ribosomal subunit protein uL16 from Oleidesulfovibrio alaskensis (strain ATCC BAA-1058 / DSM 17464 / G20) (Desulfovibrio alaskensis).